The following is a 332-amino-acid chain: uncharacterized protein (332 aa).

A disordered region spans residues 306-332 (EKNTSEVTEPKTGPSGTKDNYHLHSIF).

This is an uncharacterized protein from Homo sapiens (Human).